A 968-amino-acid chain; its full sequence is RNA polymerase-associated protein RapA (968 aa).

A Helicase ATP-binding domain is found at 164–334 (DVGRRHAPRV…FARLRLLDPN (171 aa)). An ATP-binding site is contributed by 177–184 (DEVGLGKT). Positions 280–283 (DEAH) match the DEAH box motif. Residues 490–662 (RVEWLMGYLT…YLASPDQTEG (173 aa)) form the Helicase C-terminal domain.

The protein belongs to the SNF2/RAD54 helicase family. RapA subfamily. As to quaternary structure, interacts with the RNAP. Has a higher affinity for the core RNAP than for the holoenzyme. Its ATPase activity is stimulated by binding to RNAP.

Transcription regulator that activates transcription by stimulating RNA polymerase (RNAP) recycling in case of stress conditions such as supercoiled DNA or high salt concentrations. Probably acts by releasing the RNAP, when it is trapped or immobilized on tightly supercoiled DNA. Does not activate transcription on linear DNA. Probably not involved in DNA repair. This Escherichia coli O139:H28 (strain E24377A / ETEC) protein is RNA polymerase-associated protein RapA.